The primary structure comprises 704 residues: Fibulin-1 (704 aa).

Positions 1–25 (MDKLRGARPLRLLLLLLALLPALRG) are cleaved as a signal peptide. 35 disulfides stabilise this stretch: C33–C59, C34–C66, C47–C67, C76–C107, C89–C108, C110–C134, C111–C141, C124–C142, C181–C191, C187–C200, C202–C215, C221–C234, C228–C243, C249–C261, C267–C280, C274–C289, C295–C307, C313–C326, C320–C335, C342–C355, C361–C374, C368–C383, C385–C398, C404–C416, C412–C425, C427–C440, C446–C455, C451–C464, C466–C480, C486–C499, C495–C508, C510–C524, C530–C543, C537–C552, and C557–C578. 3 consecutive Anaphylatoxin-like domains span residues 33-74 (CCDK…LEEH), 75-109 (YCSDGIEFASVHEECDSHNGENSTCEAEYFKKCCY), and 110-142 (CCLLGKTAQVQGQSCEPNLKIGYQCGIVFRACC). The N-linked (GlcNAc...) asparagine glycan is linked to N96. One can recognise an EGF-like 1 domain in the interval 177–216 (LHDGCRGGGPCSQQCRDTGSSYVCSCFVGYQLQPDGVNCE). Residues 217-262 (DINECITGTHSCGIGQTCVNTLGSFRCQRDTSCGTGYELTDDSRCK) form the EGF-like 2; calcium-binding domain. The EGF-like 3; calcium-binding domain maps to 263-308 (DIDECETGTHNCPPDFICQNTPGSFRCRPKLQCMNGFIQDALGNCI). Residues 309–356 (DINECLSTNMPCPAGQICINTDGSYTCQRISPSCGRGYHLNEDGTRCV) enclose the EGF-like 4; calcium-binding domain. An EGF-like 5; calcium-binding domain is found at 357-399 (DVDECSSSDQPCGEGHVCINGPGNYRCECKSGYSFDVISRTCI). The self-association and FN1-binding stretch occupies residues 357–441 (DVDECSSSDQ…KLSSDGRSCE (85 aa)). The 42-residue stretch at 400–441 (DINECRRYPGRLCAHKCENTPGSYYCTCTMGFKLSSDGRSCE) folds into the EGF-like 6; calcium-binding domain. Positions 442–481 (DLNECESSPCSQECANVYGSYQCYCRRGFQLSDIDGISCE) constitute an EGF-like 7; calcium-binding domain. The region spanning 482–525 (DIDECALPTGGHICSFRCINIPGSFQCTCPSTGYRLAPNARNCQ) is the EGF-like 8; calcium-binding domain. Residues 526–579 (DIDECVAETHNCSFNETCFNIQGGFRCLSLECPENYRKSGDTVRLEKTDTIRCI) enclose the EGF-like 9; calcium-binding domain. 2 N-linked (GlcNAc...) asparagine glycosylation sites follow: N536 and N540.

This sequence belongs to the fibulin family. In terms of assembly, homomultimerizes and interacts with various extracellular matrix components.

Its subcellular location is the secreted. The protein localises to the extracellular space. It localises to the extracellular matrix. Incorporated into fibronectin-containing matrix fibers. May play a role in cell adhesion and migration along protein fibers within the extracellular matrix (ECM). Could be important for certain developmental processes and contribute to the supramolecular organization of ECM architecture, in particular to those of basement membranes. The sequence is that of Fibulin-1 (FBLN1) from Gallus gallus (Chicken).